Here is a 1064-residue protein sequence, read N- to C-terminus: Importin-13 homolog A (1064 aa).

Positions 40 to 109 (ALPQIQQWLI…LDNLLLFLKT (70 aa)) constitute an Importin N-terminal domain. Disordered stretches follow at residues 695 to 722 (TTQQENNNNNNNNNNNNNNNNNNNNNNN) and 839 to 860 (NNKKNNKKINNNIDIDNDNENN). Over residues 700-722 (NNNNNNNNNNNNNNNNNNNNNNN) the composition is skewed to low complexity.

This sequence belongs to the importin beta family. As to quaternary structure, forms a complex with an importin alpha subunit.

The protein resides in the cytoplasm. The protein localises to the nucleus envelope. Required for nuclear protein import and mediates docking of import substrate to distinct nucleoporins. The chain is Importin-13 homolog A (ipo13A) from Dictyostelium discoideum (Social amoeba).